The sequence spans 249 residues: 2,3-bisphosphoglycerate-dependent phosphoglycerate mutase (249 aa).

Substrate-binding positions include 9 to 16 (RHGQSQWN), 22 to 23 (TG), Arg61, 88 to 91 (ERHY), Lys99, 115 to 116 (RR), and 184 to 185 (GN). The active-site Tele-phosphohistidine intermediate is His10. Glu88 (proton donor/acceptor) is an active-site residue.

This sequence belongs to the phosphoglycerate mutase family. BPG-dependent PGAM subfamily. As to quaternary structure, homodimer.

The enzyme catalyses (2R)-2-phosphoglycerate = (2R)-3-phosphoglycerate. Its pathway is carbohydrate degradation; glycolysis; pyruvate from D-glyceraldehyde 3-phosphate: step 3/5. Functionally, catalyzes the interconversion of 2-phosphoglycerate and 3-phosphoglycerate. In Stenotrophomonas maltophilia (strain K279a), this protein is 2,3-bisphosphoglycerate-dependent phosphoglycerate mutase.